Consider the following 127-residue polypeptide: Fluoride-specific ion channel FluC (127 aa).

The next 4 helical transmembrane spans lie at 1–21 (MPQG…GACL), 39–59 (FGTL…YGVI), 72–92 (LIGV…VETL), and 105–125 (ANVF…IELM). Residues G79 and T82 each contribute to the Na(+) site.

It belongs to the fluoride channel Fluc/FEX (TC 1.A.43) family.

Its subcellular location is the cell inner membrane. The catalysed reaction is fluoride(in) = fluoride(out). Its activity is regulated as follows. Na(+) is not transported, but it plays an essential structural role and its presence is essential for fluoride channel function. Functionally, fluoride-specific ion channel. Important for reducing fluoride concentration in the cell, thus reducing its toxicity. The sequence is that of Fluoride-specific ion channel FluC from Alteromonas mediterranea (strain DSM 17117 / CIP 110805 / LMG 28347 / Deep ecotype).